The following is a 156-amino-acid chain: Small ribosomal subunit protein uS7 (156 aa).

Belongs to the universal ribosomal protein uS7 family. Part of the 30S ribosomal subunit. Contacts proteins S9 and S11.

In terms of biological role, one of the primary rRNA binding proteins, it binds directly to 16S rRNA where it nucleates assembly of the head domain of the 30S subunit. Is located at the subunit interface close to the decoding center, probably blocks exit of the E-site tRNA. This is Small ribosomal subunit protein uS7 from Mycolicibacterium vanbaalenii (strain DSM 7251 / JCM 13017 / BCRC 16820 / KCTC 9966 / NRRL B-24157 / PYR-1) (Mycobacterium vanbaalenii).